The following is a 96-amino-acid chain: Transcription and mRNA export factor SUS1 (96 aa).

It belongs to the ENY2 family. In terms of assembly, component of the nuclear pore complex (NPC)-associated TREX-2 complex (transcription and export complex 2), composed of at least SUS1, SAC3, THP1, SEM1, and CDC31. TREX-2 contains 2 SUS1 chains. The TREX-2 complex interacts with the nucleoporin NUP1. Component of the 1.8 MDa SAGA transcription coactivator-HAT complex. SAGA is built of 5 distinct domains with specialized functions. Within the SAGA complex, SUS1, SGF11, SGF73 and UBP8 form an additional subcomplex of SAGA called the DUB module (deubiquitination module). Interacts directly with THP1, SAC3, SGF11, and with the RNA polymerase II.

The protein localises to the nucleus. It localises to the nucleoplasm. Its subcellular location is the cytoplasm. It is found in the P-body. Functionally, involved in mRNA export coupled transcription activation by association with both the TREX-2 and the SAGA complexes. At the promoters, SAGA is required for recruitment of the basal transcription machinery. It influences RNA polymerase II transcriptional activity through different activities such as TBP interaction and promoter selectivity, interaction with transcription activators, and chromatin modification through histone acetylation and deubiquitination. Within the SAGA complex, participates in a subcomplex required for deubiquitination of H2B and for the maintenance of steady-state H3 methylation levels. The TREX-2 complex functions in docking export-competent ribonucleoprotein particles (mRNPs) to the nuclear entrance of the nuclear pore complex (nuclear basket). TREX-2 participates in mRNA export and accurate chromatin positioning in the nucleus by tethering genes to the nuclear periphery. May also be involved in cytoplasmic mRNA decay by interaction with components of P-bodies. The protein is Transcription and mRNA export factor SUS1 of Kluyveromyces lactis (strain ATCC 8585 / CBS 2359 / DSM 70799 / NBRC 1267 / NRRL Y-1140 / WM37) (Yeast).